The following is a 90-amino-acid chain: Small ribosomal subunit protein uS15c (90 aa).

It belongs to the universal ribosomal protein uS15 family. In terms of assembly, part of the 30S ribosomal subunit.

The protein localises to the plastid. Its subcellular location is the chloroplast. The polypeptide is Small ribosomal subunit protein uS15c (rps15) (Panax ginseng (Korean ginseng)).